Consider the following 510-residue polypeptide: Bone morphogenetic protein 6 (510 aa).

The first 20 residues, 1–20 (MPGLGRRAQWLCWWWGLLCS), serve as a signal peptide directing secretion. A propeptide spanning residues 21–371 (CGPPPLRPPL…VSEVHVRTTR (351 aa)) is cleaved from the precursor. Disordered regions lie at residues 87-129 (PHRP…RLKS) and 143-199 (NDDE…PLTS). Residues 106–116 (PQQQQQQQQQQ) show a composition bias toward low complexity. Residues Asn-238, Asn-266, Asn-383, Asn-401, and Asn-451 are each glycosylated (N-linked (GlcNAc...) asparagine). Residues 370–402 (TRSASSRRRQQSRNRSTQSQDVSRGSGSSDYNG) form a disordered region. Positions 390–401 (DVSRGSGSSDYN) are enriched in polar residues. 3 disulfide bridges follow: Cys-409–Cys-475, Cys-438–Cys-507, and Cys-442–Cys-509.

It belongs to the TGF-beta family. In terms of assembly, interacts with SOSTDC1. Interacts (when glycosylated) with type I receptor ACVR1; the interaction may induce HAMP expression. Interacts with type II receptor ACVR2B. Interacts with Hemojuvelin/HJV. Interacts with ERFE; the interaction inhibits BMP-induced transcription of HAMP. Interacts with BMPR1A/ALK3. Forms heterodimers with BMP2 in vitro; the heterodimer then binds to its receptor BMPR1A /ALK3 and may induce HAMP expression. As to expression, expressed in the lung. Low levels seen in the kidney.

It localises to the secreted. Growth factor of the TGF-beta superfamily that plays essential roles in many developmental processes including cartilage and bone formation. Also plays an important role in the regulation of HAMP/hepcidin expression and iron metabolism by acting as a ligand for hemojuvelin/HJV. Also acts to promote expression of HAMP, potentially via the interaction with its receptor BMPR1A/ALK3. Initiates the canonical BMP signaling cascade by associating with type I receptor ACVR1 and type II receptor ACVR2B. In turn, ACVR1 propagates signal by phosphorylating SMAD1/5/8 that travel to the nucleus and act as activators and repressors of transcription of target. Can also signal through non-canonical pathway such as TAZ-Hippo signaling cascade to modulate VEGF signaling by regulating VEGFR2 expression. This Mus musculus (Mouse) protein is Bone morphogenetic protein 6 (Bmp6).